The following is a 350-amino-acid chain: Ketol-acid reductoisomerase (NADP(+)) (350 aa).

Residues 3-183 (AQIWYEDDGD…GALRAGAIKT (181 aa)) enclose the KARI N-terminal Rossmann domain. NADP(+)-binding positions include 26-29 (YGSQ), arginine 49, serine 52, serine 54, and 84-87 (DQYQ). The active site involves histidine 109. Glycine 135 serves as a coordination point for NADP(+). Residues 184–327 (TFKEETETDL…PKLRAMFSWN (144 aa)) form the KARI C-terminal knotted domain. Mg(2+) is bound by residues aspartate 192, glutamate 196, glutamate 228, and glutamate 232. Serine 253 contributes to the substrate binding site.

It belongs to the ketol-acid reductoisomerase family. Requires Mg(2+) as cofactor.

The catalysed reaction is (2R)-2,3-dihydroxy-3-methylbutanoate + NADP(+) = (2S)-2-acetolactate + NADPH + H(+). It carries out the reaction (2R,3R)-2,3-dihydroxy-3-methylpentanoate + NADP(+) = (S)-2-ethyl-2-hydroxy-3-oxobutanoate + NADPH + H(+). It participates in amino-acid biosynthesis; L-isoleucine biosynthesis; L-isoleucine from 2-oxobutanoate: step 2/4. It functions in the pathway amino-acid biosynthesis; L-valine biosynthesis; L-valine from pyruvate: step 2/4. Its function is as follows. Involved in the biosynthesis of branched-chain amino acids (BCAA). Catalyzes an alkyl-migration followed by a ketol-acid reduction of (S)-2-acetolactate (S2AL) to yield (R)-2,3-dihydroxy-isovalerate. In the isomerase reaction, S2AL is rearranged via a Mg-dependent methyl migration to produce 3-hydroxy-3-methyl-2-ketobutyrate (HMKB). In the reductase reaction, this 2-ketoacid undergoes a metal-dependent reduction by NADPH to yield (R)-2,3-dihydroxy-isovalerate. In Bifidobacterium animalis subsp. lactis (strain AD011), this protein is Ketol-acid reductoisomerase (NADP(+)).